Consider the following 188-residue polypeptide: MALTFALLVALLVLSCKSSCSVGCDLPQTHSLGSRRTLMLLAQMRRISLFSCLKDRHDFGFPQEEFGNQFQKAETIPVLHEMIQQIFNLFSTKDSSAAWDETLLDKFYTELYQQLNDLEACVIQGVGVTETPLMKEDSILAVRKYFQRITLYLKEKKYSPCAWEVVRAEIMRSFSLSTNLQESLRSKE.

The N-terminal stretch at 1-23 (MALTFALLVALLVLSCKSSCSVG) is a signal peptide. Disulfide bonds link cysteine 24-cysteine 121 and cysteine 52-cysteine 161. O-linked (GalNAc...) threonine glycosylation occurs at threonine 129.

The protein belongs to the alpha/beta interferon family. In terms of assembly, interacts with IFNAR2.

It localises to the secreted. Its function is as follows. Produced by macrophages, IFN-alpha have antiviral activities. The protein is Interferon alpha-2 (IFNA2) of Homo sapiens (Human).